A 125-amino-acid chain; its full sequence is NADPH-dependent 7-cyano-7-deazaguanine reductase (125 aa).

The active-site Thioimide intermediate is the Cys41. Asp48 acts as the Proton donor in catalysis. Substrate is bound by residues 63 to 65 and 82 to 83; these read VEL and HE.

Belongs to the GTP cyclohydrolase I family. QueF type 1 subfamily.

It localises to the cytoplasm. It carries out the reaction 7-aminomethyl-7-carbaguanine + 2 NADP(+) = 7-cyano-7-deazaguanine + 2 NADPH + 3 H(+). The protein operates within tRNA modification; tRNA-queuosine biosynthesis. Functionally, catalyzes the NADPH-dependent reduction of 7-cyano-7-deazaguanine (preQ0) to 7-aminomethyl-7-deazaguanine (preQ1). In Sulfurimonas denitrificans (strain ATCC 33889 / DSM 1251) (Thiomicrospira denitrificans (strain ATCC 33889 / DSM 1251)), this protein is NADPH-dependent 7-cyano-7-deazaguanine reductase.